The chain runs to 317 residues: Tenomodulin (317 aa).

The Cytoplasmic portion of the chain corresponds to 1-30 (MAKNPPENCEGCHILNAEALKSKKICKSLK). The chain crosses the membrane as a helical; Signal-anchor for type II membrane protein span at residues 31 to 50 (ICGLVFGILALTLIVLFWGS). The Extracellular segment spans residues 51–317 (KHFWPEVSKK…WWVARMLGRV (267 aa)). Residues 93–186 (GNGTDETLEV…ICDNVTMYWI (94 aa)) enclose the BRICHOS domain. Asparagine 94 is a glycosylation site (N-linked (GlcNAc...) asparagine). An intrachain disulfide couples cysteine 120 to cysteine 178. N-linked (GlcNAc...) asparagine glycosylation occurs at asparagine 180. Residue serine 239 is modified to Phosphoserine.

The protein belongs to the chondromodulin-1 family. As to expression, widely expressed with highest expression in tendons and ligaments, in the diaphragm, eye and skeletal muscle. Expressed in neuronal cells of all brain regions. Very low expression, if any, in glial cells.

It localises to the membrane. The protein localises to the nucleus envelope. In terms of biological role, may be an angiogenesis inhibitor. The sequence is that of Tenomodulin (Tnmd) from Mus musculus (Mouse).